A 362-amino-acid chain; its full sequence is DNA replication and repair protein RecF (362 aa).

30–37 (GPNGSGKT) contributes to the ATP binding site.

This sequence belongs to the RecF family.

It localises to the cytoplasm. The RecF protein is involved in DNA metabolism; it is required for DNA replication and normal SOS inducibility. RecF binds preferentially to single-stranded, linear DNA. It also seems to bind ATP. The protein is DNA replication and repair protein RecF of Proteus mirabilis (strain HI4320).